The primary structure comprises 481 residues: E3 ubiquitin-protein ligase makorin-1 (481 aa).

3 C3H1-type zinc fingers span residues 55 to 82 (WTKQ…HDLS), 84 to 111 (SPYG…HSKP), and 208 to 235 (ETKK…HGDS). The tract at residues 236-263 (CDMCGLQVLHPVDAAQRSQHIKSCIEAH) is makorin-type Cys-His. An RING-type zinc finger spans residues 281 to 335 (CGICMEVVYEKANPSERRFGILSNCNHTYCLKCIRKWRSAKQFESKIIKSCPECR). The C3H1-type 4 zinc finger occupies 364-393 (AMSNKACRYFDEGRGSCPFGGNCFYKHAYP).

Interacts with p53/TP53 and CDKN1A. Interacts with TERT, modulating telomere length homeostasis. In terms of processing, auto-ubiquitinated; which leads to proteasomal degradation. Highly expressed in embryo, in specific cell types of the central nervous system, in brain with the strongest levels of expression in the mantle layers and in testis. Moderate to low levels in somatic tissues.

It catalyses the reaction S-ubiquitinyl-[E2 ubiquitin-conjugating enzyme]-L-cysteine + [acceptor protein]-L-lysine = [E2 ubiquitin-conjugating enzyme]-L-cysteine + N(6)-ubiquitinyl-[acceptor protein]-L-lysine.. The protein operates within protein modification; protein ubiquitination. E3 ubiquitin ligase catalyzing the covalent attachment of ubiquitin moieties onto substrate proteins. These substrates include FILIP1, p53/TP53, CDKN1A and TERT. Keeps cells alive by suppressing p53/TP53 under normal conditions, but stimulates apoptosis by repressing CDKN1A under stress conditions. Acts as a negative regulator of telomerase. Has negative and positive effects on RNA polymerase II-dependent transcription. This Mus musculus (Mouse) protein is E3 ubiquitin-protein ligase makorin-1 (Mkrn1).